Reading from the N-terminus, the 233-residue chain is Uridylate kinase (233 aa).

9–10 (GS) contacts ATP. UMP is bound at residue Gly-43. 2 residues coordinate ATP: Gly-44 and Arg-48. UMP-binding positions include Asp-65 and 113–119 (VTPGQTT). ATP contacts are provided by Thr-139, Tyr-145, and Asp-148.

This sequence belongs to the UMP kinase family. Homohexamer.

It localises to the cytoplasm. It catalyses the reaction UMP + ATP = UDP + ADP. It functions in the pathway pyrimidine metabolism; CTP biosynthesis via de novo pathway; UDP from UMP (UMPK route): step 1/1. Its activity is regulated as follows. Inhibited by UTP. Catalyzes the reversible phosphorylation of UMP to UDP. This is Uridylate kinase from Methanosarcina mazei (strain ATCC BAA-159 / DSM 3647 / Goe1 / Go1 / JCM 11833 / OCM 88) (Methanosarcina frisia).